The sequence spans 320 residues: Lipoyl synthase (320 aa).

[4Fe-4S] cluster contacts are provided by C67, C72, C78, C93, C97, C100, and S307. In terms of domain architecture, Radical SAM core spans 79 to 296 (FNHGTATFMI…RTKAEVMGFE (218 aa)).

It belongs to the radical SAM superfamily. Lipoyl synthase family. It depends on [4Fe-4S] cluster as a cofactor.

The protein resides in the cytoplasm. The catalysed reaction is [[Fe-S] cluster scaffold protein carrying a second [4Fe-4S](2+) cluster] + N(6)-octanoyl-L-lysyl-[protein] + 2 oxidized [2Fe-2S]-[ferredoxin] + 2 S-adenosyl-L-methionine + 4 H(+) = [[Fe-S] cluster scaffold protein] + N(6)-[(R)-dihydrolipoyl]-L-lysyl-[protein] + 4 Fe(3+) + 2 hydrogen sulfide + 2 5'-deoxyadenosine + 2 L-methionine + 2 reduced [2Fe-2S]-[ferredoxin]. It participates in protein modification; protein lipoylation via endogenous pathway; protein N(6)-(lipoyl)lysine from octanoyl-[acyl-carrier-protein]: step 2/2. Catalyzes the radical-mediated insertion of two sulfur atoms into the C-6 and C-8 positions of the octanoyl moiety bound to the lipoyl domains of lipoate-dependent enzymes, thereby converting the octanoylated domains into lipoylated derivatives. In Mannheimia succiniciproducens (strain KCTC 0769BP / MBEL55E), this protein is Lipoyl synthase.